A 171-amino-acid polypeptide reads, in one-letter code: S-ribosylhomocysteine lyase (171 aa).

3 residues coordinate Fe cation: histidine 54, histidine 58, and cysteine 128.

The protein belongs to the LuxS family. Homodimer. It depends on Fe cation as a cofactor.

It carries out the reaction S-(5-deoxy-D-ribos-5-yl)-L-homocysteine = (S)-4,5-dihydroxypentane-2,3-dione + L-homocysteine. Its function is as follows. Involved in the synthesis of autoinducer 2 (AI-2) which is secreted by bacteria and is used to communicate both the cell density and the metabolic potential of the environment. The regulation of gene expression in response to changes in cell density is called quorum sensing. Catalyzes the transformation of S-ribosylhomocysteine (RHC) to homocysteine (HC) and 4,5-dihydroxy-2,3-pentadione (DPD). The polypeptide is S-ribosylhomocysteine lyase (Escherichia fergusonii (strain ATCC 35469 / DSM 13698 / CCUG 18766 / IAM 14443 / JCM 21226 / LMG 7866 / NBRC 102419 / NCTC 12128 / CDC 0568-73)).